The sequence spans 336 residues: HTH-type transcriptional repressor PurR (336 aa).

One can recognise an HTH lacI-type domain in the interval 2–56 (ATIKDVAKMAGVSTTTVSHVINKTRFVAKDTEEAVLSAIKQLNYSPSAVARSLKV). The segment at residues 4–23 (IKDVAKMAGVSTTTVSHVIN) is a DNA-binding region (H-T-H motif). A DNA-binding region spans residues 48–56 (SAVARSLKV). Residues Tyr-73, Lys-188, Thr-190, Phe-219, and Asp-273 each coordinate hypoxanthine.

In terms of assembly, homodimer.

It participates in purine metabolism; purine nucleotide biosynthesis [regulation]. Is the main repressor of the genes involved in the de novo synthesis of purine nucleotides, regulating purB, purC, purEK, purF, purHD, purL, purMN and guaBA expression. PurR is allosterically activated to bind its cognate DNA by binding the purine corepressors, hypoxanthine or guanine, thereby effecting transcription repression. The chain is HTH-type transcriptional repressor PurR from Haemophilus influenzae (strain 86-028NP).